Here is a 181-residue protein sequence, read N- to C-terminus: MATRIRLQRHGRKSYAFYSIVIADSRAPRDGKFTEKIGTYNPNTNPATVDLNFERALHWVLVGAQPSDTVRNILSREGVYMKKHLLGGVAKGAFGEAEAEAKFEAWKNNKQSGLSALKAKEEEAKKAEAKARLEAEKKVNEVKAKALAEKKAAEEAAKAAAEAPAEEAAPAEEAATEAAAE.

Positions K150 to E181 are disordered. Positions K158–E181 are enriched in low complexity.

Belongs to the bacterial ribosomal protein bS16 family.

This is Small ribosomal subunit protein bS16 from Bacteroides fragilis (strain ATCC 25285 / DSM 2151 / CCUG 4856 / JCM 11019 / LMG 10263 / NCTC 9343 / Onslow / VPI 2553 / EN-2).